The chain runs to 398 residues: Elongation factor Tu (398 aa).

Residues 10–207 (KPHVNIGTIG…TVDSYIPEPE (198 aa)) enclose the tr-type G domain. The G1 stretch occupies residues 19–26 (GHVDHGKT). Residue 19–26 (GHVDHGKT) coordinates GTP. Thr26 lines the Mg(2+) pocket. The G2 stretch occupies residues 63 to 67 (GITIN). The segment at 84–87 (DAPG) is G3. GTP-binding positions include 84–88 (DAPGH) and 139–142 (NKVD). The segment at 139-142 (NKVD) is G4. Positions 177 to 179 (SAL) are G5.

It belongs to the TRAFAC class translation factor GTPase superfamily. Classic translation factor GTPase family. EF-Tu/EF-1A subfamily. In terms of assembly, monomer.

It localises to the cytoplasm. It carries out the reaction GTP + H2O = GDP + phosphate + H(+). Functionally, GTP hydrolase that promotes the GTP-dependent binding of aminoacyl-tRNA to the A-site of ribosomes during protein biosynthesis. The polypeptide is Elongation factor Tu (Streptococcus pyogenes serotype M1).